We begin with the raw amino-acid sequence, 379 residues long: Cobalt-precorrin-5B C(1)-methyltransferase (379 aa).

This sequence belongs to the CbiD family.

The enzyme catalyses Co-precorrin-5B + S-adenosyl-L-methionine = Co-precorrin-6A + S-adenosyl-L-homocysteine. It participates in cofactor biosynthesis; adenosylcobalamin biosynthesis; cob(II)yrinate a,c-diamide from sirohydrochlorin (anaerobic route): step 6/10. Catalyzes the methylation of C-1 in cobalt-precorrin-5B to form cobalt-precorrin-6A. This is Cobalt-precorrin-5B C(1)-methyltransferase from Salmonella paratyphi B (strain ATCC BAA-1250 / SPB7).